The following is a 235-amino-acid chain: Octanoyltransferase (235 aa).

The region spanning 37–220 (AGGPDTLLLL…AVNDALDGWL (184 aa)) is the BPL/LPL catalytic domain. Residues 78-85 (RGGKITWH), 150-152 (AIG), and 163-165 (GFA) contribute to the substrate site. Cysteine 181 (acyl-thioester intermediate) is an active-site residue.

The protein belongs to the LipB family.

The protein localises to the cytoplasm. It carries out the reaction octanoyl-[ACP] + L-lysyl-[protein] = N(6)-octanoyl-L-lysyl-[protein] + holo-[ACP] + H(+). The protein operates within protein modification; protein lipoylation via endogenous pathway; protein N(6)-(lipoyl)lysine from octanoyl-[acyl-carrier-protein]: step 1/2. In terms of biological role, catalyzes the transfer of endogenously produced octanoic acid from octanoyl-acyl-carrier-protein onto the lipoyl domains of lipoate-dependent enzymes. Lipoyl-ACP can also act as a substrate although octanoyl-ACP is likely to be the physiological substrate. This chain is Octanoyltransferase, found in Mycobacterium leprae (strain Br4923).